The primary structure comprises 85 residues: Large ribosomal subunit protein bL27 (85 aa).

Residues 1–22 are disordered; that stretch reads MAHKKAGGSTRNGRDSESKRLG.

It belongs to the bacterial ribosomal protein bL27 family.

This chain is Large ribosomal subunit protein bL27, found in Vibrio vulnificus (strain CMCP6).